The following is a 76-amino-acid chain: Conotoxin Vc6.9 (76 aa).

The signal sequence occupies residues 1 to 19; that stretch reads MEKLTILLLVAAVLMSTQA. A propeptide spanning residues 20-41 is cleaved from the precursor; that stretch reads LMQEQRQKAKINLFSKRKPSAE. 3 disulfide bridges follow: Cys-49–Cys-63, Cys-56–Cys-67, and Cys-62–Cys-72.

It belongs to the conotoxin O2 superfamily. Expressed by the venom duct.

The protein resides in the secreted. In terms of biological role, inhibits voltage-gated ion channels. The chain is Conotoxin Vc6.9 from Conus victoriae (Queen Victoria cone).